The sequence spans 962 residues: Glycine dehydrogenase (decarboxylating) (962 aa).

At lysine 710 the chain carries N6-(pyridoxal phosphate)lysine.

This sequence belongs to the GcvP family. The glycine cleavage system is composed of four proteins: P, T, L and H. The cofactor is pyridoxal 5'-phosphate.

It catalyses the reaction N(6)-[(R)-lipoyl]-L-lysyl-[glycine-cleavage complex H protein] + glycine + H(+) = N(6)-[(R)-S(8)-aminomethyldihydrolipoyl]-L-lysyl-[glycine-cleavage complex H protein] + CO2. Its function is as follows. The glycine cleavage system catalyzes the degradation of glycine. The P protein binds the alpha-amino group of glycine through its pyridoxal phosphate cofactor; CO(2) is released and the remaining methylamine moiety is then transferred to the lipoamide cofactor of the H protein. This chain is Glycine dehydrogenase (decarboxylating), found in Idiomarina loihiensis (strain ATCC BAA-735 / DSM 15497 / L2-TR).